Reading from the N-terminus, the 91-residue chain is Teretoxin Tan22.13 (91 aa).

The first 21 residues, Met-1 to Lys-21, serve as a signal peptide directing secretion. Positions Met-22–Arg-24 are excised as a propeptide.

Belongs to the teretoxin C (TC) superfamily. Contains 4 disulfide bonds. In terms of tissue distribution, expressed by the venom duct.

Its subcellular location is the secreted. This Terebra anilis (Auger snail) protein is Teretoxin Tan22.13.